The primary structure comprises 383 residues: Anhydro-N-acetylmuramic acid kinase (383 aa).

9–16 (GTSLDGID) lines the ATP pocket.

Belongs to the anhydro-N-acetylmuramic acid kinase family.

The catalysed reaction is 1,6-anhydro-N-acetyl-beta-muramate + ATP + H2O = N-acetyl-D-muramate 6-phosphate + ADP + H(+). The protein operates within amino-sugar metabolism; 1,6-anhydro-N-acetylmuramate degradation. Its pathway is cell wall biogenesis; peptidoglycan recycling. Its function is as follows. Catalyzes the specific phosphorylation of 1,6-anhydro-N-acetylmuramic acid (anhMurNAc) with the simultaneous cleavage of the 1,6-anhydro ring, generating MurNAc-6-P. Is required for the utilization of anhMurNAc either imported from the medium or derived from its own cell wall murein, and thus plays a role in cell wall recycling. This Clostridioides difficile (strain 630) (Peptoclostridium difficile) protein is Anhydro-N-acetylmuramic acid kinase.